We begin with the raw amino-acid sequence, 165 residues long: Adenine phosphoribosyltransferase (165 aa).

Belongs to the purine/pyrimidine phosphoribosyltransferase family. In terms of assembly, homodimer.

The protein localises to the cytoplasm. The enzyme catalyses AMP + diphosphate = 5-phospho-alpha-D-ribose 1-diphosphate + adenine. Its pathway is purine metabolism; AMP biosynthesis via salvage pathway; AMP from adenine: step 1/1. Functionally, catalyzes a salvage reaction resulting in the formation of AMP, that is energically less costly than de novo synthesis. The chain is Adenine phosphoribosyltransferase from Bdellovibrio bacteriovorus (strain ATCC 15356 / DSM 50701 / NCIMB 9529 / HD100).